A 472-amino-acid chain; its full sequence is Glycine--tRNA ligase (472 aa).

The substrate site is built by Arg-109 and Glu-174. ATP is bound by residues 206–208 (RNE), 216–221 (FRTREF), 293–294 (EL), and 337–340 (GLTR). Residue 221-225 (FEQME) participates in substrate binding. 333–337 (EPAAG) provides a ligand contact to substrate.

The protein belongs to the class-II aminoacyl-tRNA synthetase family. As to quaternary structure, homodimer.

Its subcellular location is the cytoplasm. It carries out the reaction tRNA(Gly) + glycine + ATP = glycyl-tRNA(Gly) + AMP + diphosphate. Functionally, catalyzes the attachment of glycine to tRNA(Gly). This chain is Glycine--tRNA ligase, found in Cutibacterium acnes (strain DSM 16379 / KPA171202) (Propionibacterium acnes).